The primary structure comprises 545 residues: Betaine receptor acr-23 (545 aa).

The first 19 residues, 1-19 (MHRIYTFLIFISQLALGLS), serve as a signal peptide directing secretion. Residues 20–244 (NNPDIPIQYE…DVVIQRKPLY (225 aa)) are Extracellular-facing. N-linked (GlcNAc...) asparagine glycosylation is found at Asn53 and Asn97. 2 disulfide bridges follow: Cys157–Cys171 and Cys224–Cys225. Asn228 is a glycosylation site (N-linked (GlcNAc...) asparagine). The chain crosses the membrane as a helical span at residues 245 to 265 (YVLNLIAPTAVITFISIIGFF). The N-linked (GlcNAc...) asparagine glycan is linked to Asn276. The next 2 helical transmembrane spans lie at 287–307 (EKITLGITTLLSMSIMIFMVS) and 317–337 (VPLIALFYTLMITIISVGTLA). Topologically, residues 338–512 (ASSVIFVQKL…WDWVAAVLER (175 aa)) are cytoplasmic. A helical membrane pass occupies residues 513–533 (VFLIFFTICFLFSAIGINLYG).

Belongs to the ligand-gated ion channel (TC 1.A.9) family. Acetylcholine receptor (TC 1.A.9.1) subfamily. In terms of tissue distribution, expressed in the body wall muscles that are arranged into four longitudinal bundles, some mechanosensory neurons, the head muscles and multiple interneurons. Not expressed in motor neurons (at protein level).

The protein resides in the cell membrane. In terms of biological role, betaine receptor that functions as a ligand-gated non-selective monovalent cation channel in mechanosensory neurons to maintain basal levels of locomotion. The channel is permeable to Na(+) and K(+) but not to Ba(2+) or Ca(2+) ions. Elicits current in response to betaine, very weak current in response to choline, virtually no current in response to acetylcholine and nicotine, and no current in response to glycine and GABA. This is Betaine receptor acr-23 from Caenorhabditis elegans.